Reading from the N-terminus, the 930-residue chain is Isoleucine--tRNA ligase (930 aa).

Positions 57 to 67 (PYANGNIHVGH) match the 'HIGH' region motif. Glu-554 provides a ligand contact to L-isoleucyl-5'-AMP. Residues 595–599 (KMSKS) carry the 'KMSKS' region motif. Lys-598 contributes to the ATP binding site. Zn(2+) is bound by residues Cys-888, Cys-891, Cys-908, and Cys-911.

This sequence belongs to the class-I aminoacyl-tRNA synthetase family. IleS type 1 subfamily. As to quaternary structure, monomer. Zn(2+) is required as a cofactor.

It localises to the cytoplasm. The enzyme catalyses tRNA(Ile) + L-isoleucine + ATP = L-isoleucyl-tRNA(Ile) + AMP + diphosphate. Functionally, catalyzes the attachment of isoleucine to tRNA(Ile). As IleRS can inadvertently accommodate and process structurally similar amino acids such as valine, to avoid such errors it has two additional distinct tRNA(Ile)-dependent editing activities. One activity is designated as 'pretransfer' editing and involves the hydrolysis of activated Val-AMP. The other activity is designated 'posttransfer' editing and involves deacylation of mischarged Val-tRNA(Ile). The chain is Isoleucine--tRNA ligase from Streptococcus pneumoniae (strain ATCC 700669 / Spain 23F-1).